The sequence spans 924 residues: LPS-assembly protein LptD (924 aa).

The signal sequence occupies residues 1–33 (MAVKSLVFRRKFPLLVTGSLLALQPVAALTVQA). A disordered region spans residues 58–102 (NLPPRPAHTATSVSTAAAGSSVSGSGGETVEAEPTQRLVTESGGR). The span at 66–90 (TATSVSTAAAGSSVSGSGGETVEAE) shows a compositional bias: low complexity.

This sequence belongs to the LptD family. As to quaternary structure, component of the lipopolysaccharide transport and assembly complex. Interacts with LptE and LptA.

The protein resides in the cell outer membrane. Functionally, together with LptE, is involved in the assembly of lipopolysaccharide (LPS) at the surface of the outer membrane. This is LPS-assembly protein LptD from Pseudomonas aeruginosa (strain UCBPP-PA14).